The primary structure comprises 431 residues: Saglin (431 aa).

Positions 1 to 39 are cleaved as a signal peptide; sequence MSVRDYSGVQVISSRKHRSMSRLPTVLLLLASAAVLAAG. Asn95 is a glycosylation site (N-linked (GlcNAc...) asparagine). Residues 120-169 are a coiled coil; it reads LDDAQRQMEQEHRQYAATLEEQLHAAQQETQQEQEMKKALQKQLDALTDS.

In terms of assembly, homodimer. In terms of tissue distribution, female salivary gland (at protein level). Not detected in female carcass without salivary glands, midgut and hemolymph (at protein level). Probably not expressed in male tissues.

The protein localises to the secreted. Its function is as follows. (Microbial infection) Facilitates efficient midgut colonization by Plasmodium berghei parasites. Promotes successful transmission of Plasmodium berghei at low infection densities. In terms of biological role, (Microbial infection) Facilitates efficient midgut colonization by Plasmodium falciparum. The sequence is that of Saglin from Anopheles coluzzii (African malaria mosquito).